Here is a 152-residue protein sequence, read N- to C-terminus: Large ribosomal subunit protein bL9 (152 aa).

It belongs to the bacterial ribosomal protein bL9 family.

Its function is as follows. Binds to the 23S rRNA. This Mycoplasmopsis synoviae (strain 53) (Mycoplasma synoviae) protein is Large ribosomal subunit protein bL9.